The following is a 348-amino-acid chain: Dihydroorotate dehydrogenase (quinone) (348 aa).

FMN contacts are provided by residues 60 to 64 and threonine 84; that span reads AGLDK. Lysine 64 contributes to the substrate binding site. Residue 109–113 coordinates substrate; that stretch reads NRMGF. Residues asparagine 137 and asparagine 170 each coordinate FMN. Substrate is bound at residue asparagine 170. The active-site Nucleophile is the serine 173. Substrate is bound at residue asparagine 175. 2 residues coordinate FMN: lysine 215 and threonine 243. Substrate is bound at residue 244–245; sequence NT. Residues glycine 266, glycine 295, and 316–317 each bind FMN; that span reads YS.

It belongs to the dihydroorotate dehydrogenase family. Type 2 subfamily. Monomer. The cofactor is FMN.

The protein resides in the cell membrane. It carries out the reaction (S)-dihydroorotate + a quinone = orotate + a quinol. It participates in pyrimidine metabolism; UMP biosynthesis via de novo pathway; orotate from (S)-dihydroorotate (quinone route): step 1/1. Catalyzes the conversion of dihydroorotate to orotate with quinone as electron acceptor. The sequence is that of Dihydroorotate dehydrogenase (quinone) from Nitrosospira multiformis (strain ATCC 25196 / NCIMB 11849 / C 71).